The chain runs to 92 residues: Small ribosomal subunit protein uS19 (92 aa).

Belongs to the universal ribosomal protein uS19 family.

In terms of biological role, protein S19 forms a complex with S13 that binds strongly to the 16S ribosomal RNA. The sequence is that of Small ribosomal subunit protein uS19 from Shewanella amazonensis (strain ATCC BAA-1098 / SB2B).